A 496-amino-acid polypeptide reads, in one-letter code: Putative ammonium transporter 1 member 5 (496 aa).

The next 11 helical transmembrane spans lie at 50–70, 85–105, 131–151, 156–176, 202–222, 246–266, 284–306, 314–334, 336–356, 369–389, and 422–442; these read LLFSAYLVFAMQLGFAMLCAG, VLDAAAGGLFYYLFGYAFAFG, FFLYQWAFAIAAAGITSGSIA, FVAYLIYSSFLTGFVYPVVSH, FAGSGVVHMVGGIAGLWGALI, LVVLGTFLLWFGWYGFNPGSF, GIGRTAVTTTLSGCTAALTTLFG, WNVTDVCNGLLGGFAAITAGC, VVDPWAAIVCGFVASLVLIGC, LEAAQLHGGCGAWGLIFVGLF, and LVQIIVIVGWVSATMGTLFFI. Residue Ser485 is modified to Phosphoserine.

The protein belongs to the ammonia transporter channel (TC 1.A.11.2) family.

The protein resides in the membrane. Its function is as follows. Involved in ammonium transport. The protein is Putative ammonium transporter 1 member 5 (AMT1-5) of Arabidopsis thaliana (Mouse-ear cress).